Consider the following 367-residue polypeptide: Aurora kinase (367 aa).

The disordered stretch occupies residues 30–49; that stretch reads TTATNGAPPQARVQPGKGYR. The Protein kinase domain maps to 109–360; it reads FEIGKVLGKG…LKEVKKHPWI (252 aa). ATP contacts are provided by residues 115 to 123 and K138; that span reads LGKGKFGRV. The active-site Proton acceptor is D232.

Belongs to the protein kinase superfamily. Ser/Thr protein kinase family. Aurora subfamily.

The protein localises to the nucleus. It is found in the cytoplasm. It localises to the cytoskeleton. Its subcellular location is the spindle. The protein resides in the chromosome. The protein localises to the centromere. It is found in the kinetochore. It catalyses the reaction L-seryl-[protein] + ATP = O-phospho-L-seryl-[protein] + ADP + H(+). It carries out the reaction L-threonyl-[protein] + ATP = O-phospho-L-threonyl-[protein] + ADP + H(+). Component of the chromosomal passenger complex (CPC), a complex that acts as a key regulator of chromosome segregation and cytokinesis. Has a role in error-correction of aberrent kinetochore-microtubule attachments to ensure that sister kinetochores become bioriented and connect to opposite poles by promoting spindle assembly checkpoint signaling. This is Aurora kinase (IPL1) from Eremothecium gossypii (strain ATCC 10895 / CBS 109.51 / FGSC 9923 / NRRL Y-1056) (Yeast).